Here is a 612-residue protein sequence, read N- to C-terminus: MAAPEGSGLGEDARLDQETAQWLRWDKNSLTLEAVKRLIAEGNKEELRKCFGARMEFGTAGLRAAMGPGISRMNDLTIIQTTQGFCRYLEKQFSDLKQKGIVISFDARAHPSSGGSSRRFARLAATTFISQGIPVYLFSDITPTPFVPFTVSHLKLCAGIMITASHNPKQDNGYKVYWDNGAQIISPHDKGISQAIEENLEPWPQAWDDSLIDSSPLLHNPSASINNDYFEDLKKYCFHRSVNRETKVKFVHTSVHGVGHSFVQSAFKAFDLVPPEAVPEQKDPDPEFPTVKYPNPEEGKGVLTLSFALADKTKARIVLANDPDADRLAVAEKQDSGEWRVFSGNELGALLGWWLFTSWKEKNQDRSALKDTYMLSSTVSSKILRAIALKEGFHFEETLTGFKWMGNRAKQLIDQGKTVLFAFEEAIGYMCCPFVLDKDGVSAAVISAELASFLATKNLSLSQQLKAIYVEYGYHITKASYFICHDQETIKKLFENLRNYDGKNNYPKACGKFEISAIRDLTTGYDDSQPDKKAVLPTSKSSQMITFTFANGGVATMRTSGTEPKIKYYAELCAPPGNSDPEQLKKELNELVSAIEEHFFQPQKYNLQPKAD.

The residue at position 2 (Ala-2) is an N-acetylalanine. Residues Arg-63 and Ser-165 each coordinate alpha-D-glucose 1,6-bisphosphate. The active-site Phosphoserine intermediate is the Ser-165. Mg(2+)-binding residues include Ser-165, Asp-322, Asp-324, and Asp-326. Ser-165 carries the post-translational modification Phosphoserine. 5 residues coordinate alpha-D-glucose 1,6-bisphosphate: Asp-326, Arg-327, Thr-400, Glu-424, and Lys-438.

It belongs to the phosphohexose mutase family. Monomer. Mg(2+) is required as a cofactor.

The protein localises to the cytoplasm. It is found in the cytosol. It catalyses the reaction alpha-D-ribose 1-phosphate = D-ribose 5-phosphate. The catalysed reaction is 2-deoxy-alpha-D-ribose 1-phosphate = 2-deoxy-D-ribose 5-phosphate. It carries out the reaction alpha-D-glucose 1-phosphate = alpha-D-glucose 6-phosphate. The enzyme catalyses O-phospho-L-seryl-[protein] + alpha-D-glucose 1-phosphate = alpha-D-glucose 1,6-bisphosphate + L-seryl-[protein]. It catalyses the reaction alpha-D-glucose 1,6-bisphosphate + L-seryl-[protein] = O-phospho-L-seryl-[protein] + alpha-D-glucose 6-phosphate. The phosphomutase activity is stimulated by glucose 1,6-bisphosphate. In terms of biological role, catalyzes the conversion of the nucleoside breakdown products ribose-1-phosphate and deoxyribose-1-phosphate to the corresponding 5-phosphopentoses. Catalyzes the reversible isomerization of alpha-D-glucose 1-phosphate to alpha-D-glucose 6-phosphate but with a lower catalytic efficiency. The mechanism proceeds via the intermediate compound alpha-D-glucose 1,6-bisphosphate. In vitro, also has a low glucose 1,6-bisphosphate synthase activity which is most probably not physiologically relevant. The polypeptide is Phosphopentomutase (Homo sapiens (Human)).